We begin with the raw amino-acid sequence, 75 residues long: Probable [Fe-S]-dependent transcriptional repressor (75 aa).

4 residues coordinate iron-sulfur cluster: C55, C60, C63, and C72.

Belongs to the FeoC family.

In terms of biological role, may function as a transcriptional regulator that controls feoABC expression. The polypeptide is Probable [Fe-S]-dependent transcriptional repressor (Serratia marcescens).